The sequence spans 137 residues: Fluoride-specific ion channel FluC 1 (137 aa).

4 helical membrane passes run 4–24, 37–57, 67–87, and 98–118; these read LIYIIVGIAGILGALSRYYLG, LATLLINLAGCFLLAWLTTYI, VITGIGTGFIGSFTTFSTLSV, and WGIAFLYVSCSILGGLIMSGL. Gly-77 and Thr-80 together coordinate Na(+).

The protein belongs to the fluoride channel Fluc/FEX (TC 1.A.43) family.

It localises to the cell membrane. The catalysed reaction is fluoride(in) = fluoride(out). With respect to regulation, na(+) is not transported, but it plays an essential structural role and its presence is essential for fluoride channel function. Functionally, fluoride-specific ion channel. Important for reducing fluoride concentration in the cell, thus reducing its toxicity. The chain is Fluoride-specific ion channel FluC 1 from Bacillus anthracis.